The following is a 153-amino-acid chain: NADPH-dependent 7-cyano-7-deazaguanine reductase (153 aa).

The Thioimide intermediate role is filled by C51. D58 (proton donor) is an active-site residue. Substrate contacts are provided by residues 73–75 (VES) and 92–93 (HE).

The protein belongs to the GTP cyclohydrolase I family. QueF type 1 subfamily.

It localises to the cytoplasm. The catalysed reaction is 7-aminomethyl-7-carbaguanine + 2 NADP(+) = 7-cyano-7-deazaguanine + 2 NADPH + 3 H(+). It functions in the pathway tRNA modification; tRNA-queuosine biosynthesis. In terms of biological role, catalyzes the NADPH-dependent reduction of 7-cyano-7-deazaguanine (preQ0) to 7-aminomethyl-7-deazaguanine (preQ1). The chain is NADPH-dependent 7-cyano-7-deazaguanine reductase from Granulibacter bethesdensis (strain ATCC BAA-1260 / CGDNIH1).